The sequence spans 204 residues: Sec-independent protein translocase protein TatB (204 aa).

Residues 1 to 21 (MFDIGFSELLLIFIVGLVVLG) traverse the membrane as a helical segment. The span at 154-166 (VVSSVDSIQNGQS) shows a compositional bias: polar residues. The interval 154–204 (VVSSVDSIQNGQSDLELDAQAEVDRQLAAMMDKYAPPDDVAENPISTEKTS) is disordered.

It belongs to the TatB family. As to quaternary structure, the Tat system comprises two distinct complexes: a TatABC complex, containing multiple copies of TatA, TatB and TatC subunits, and a separate TatA complex, containing only TatA subunits. Substrates initially bind to the TatABC complex, which probably triggers association of the separate TatA complex to form the active translocon.

It is found in the cell inner membrane. In terms of biological role, part of the twin-arginine translocation (Tat) system that transports large folded proteins containing a characteristic twin-arginine motif in their signal peptide across membranes. Together with TatC, TatB is part of a receptor directly interacting with Tat signal peptides. TatB may form an oligomeric binding site that transiently accommodates folded Tat precursor proteins before their translocation. This Mannheimia succiniciproducens (strain KCTC 0769BP / MBEL55E) protein is Sec-independent protein translocase protein TatB.